A 309-amino-acid chain; its full sequence is MICFLLIILSILVVFAFVLGNFSNGFIALVNVIDWVKRQKISSADQILTALVVSRVGLLWVILLHWYSNVLNSALYSSEVIIFISNAWAIINHFSIWLATSLSIFYLLKIVNFSRLIFHHLKRKAKSVVLVIVLGPLVFLVCHLVMKHTYINVWTKEYEGNVTWKIKLRNAIHLSNLTVSTLANLIPFTLTLISFLLLIYSLCKHLKKMQLHGKGSQDPSTKVHIKALQTVTSFLLLCAIYFLSMIISVCNFGRLEKQPVFMFCQAIIFSYPSTHPFILILGNKKLKQIFLSVFWQMRYWVKGEKPSSP.

Residue Met1 is a topological domain, extracellular. A helical transmembrane segment spans residues 2-22 (ICFLLIILSILVVFAFVLGNF). Over 23-46 (SNGFIALVNVIDWVKRQKISSADQ) the chain is Cytoplasmic. Residues 47–67 (ILTALVVSRVGLLWVILLHWY) traverse the membrane as a helical segment. Over 68–79 (SNVLNSALYSSE) the chain is Extracellular. A helical membrane pass occupies residues 80-100 (VIIFISNAWAIINHFSIWLAT). Over 101 to 126 (SLSIFYLLKIVNFSRLIFHHLKRKAK) the chain is Cytoplasmic. A helical membrane pass occupies residues 127 to 147 (SVVLVIVLGPLVFLVCHLVMK). Residues 148 to 181 (HTYINVWTKEYEGNVTWKIKLRNAIHLSNLTVST) are Extracellular-facing. N-linked (GlcNAc...) asparagine glycosylation is found at Asn161 and Asn176. The chain crosses the membrane as a helical span at residues 182 to 202 (LANLIPFTLTLISFLLLIYSL). The Cytoplasmic segment spans residues 203 to 229 (CKHLKKMQLHGKGSQDPSTKVHIKALQ). The helical transmembrane segment at 230-250 (TVTSFLLLCAIYFLSMIISVC) threads the bilayer. The Extracellular segment spans residues 251–259 (NFGRLEKQP). A helical membrane pass occupies residues 260–280 (VFMFCQAIIFSYPSTHPFILI). At 281-309 (LGNKKLKQIFLSVFWQMRYWVKGEKPSSP) the chain is on the cytoplasmic side.

Belongs to the G-protein coupled receptor T2R family.

Its subcellular location is the membrane. Its function is as follows. Putative taste receptor which may play a role in the perception of bitterness. The protein is Putative taste receptor type 2 member 36 of Homo sapiens (Human).